A 407-amino-acid polypeptide reads, in one-letter code: Protein FAM53B (407 aa).

2 disordered regions span residues 204–286 (SSSM…RPSL) and 306–380 (ITGE…DTEP). Composition is skewed to basic and acidic residues over residues 264-281 (LNEK…DTHK) and 327-339 (DAVD…HNLK). A Nuclear localization signal motif is present at residues 272 to 275 (KRRR). Residues 357 to 369 (ITEEVDWNCDDGT) are compositionally biased toward acidic residues.

The protein belongs to the FAM53 family. Interacts with ctnnb1. Predominantly expressed in proliferating cells throughout embryonic development.

The protein resides in the nucleus. Functionally, acts as a regulator of Wnt signaling pathway by regulating beta-catenin (ctnnb1) nuclear localization. This is Protein FAM53B from Oryzias latipes (Japanese rice fish).